Reading from the N-terminus, the 119-residue chain is Protein TusC (119 aa).

It belongs to the DsrF/TusC family. In terms of assembly, heterohexamer, formed by a dimer of trimers. The hexameric TusBCD complex contains 2 copies each of TusB, TusC and TusD. The TusBCD complex interacts with TusE.

The protein localises to the cytoplasm. In terms of biological role, part of a sulfur-relay system required for 2-thiolation of 5-methylaminomethyl-2-thiouridine (mnm(5)s(2)U) at tRNA wobble positions. This chain is Protein TusC, found in Buchnera aphidicola subsp. Acyrthosiphon pisum (strain 5A).